A 134-amino-acid polypeptide reads, in one-letter code: DNA-directed RNA polymerase subunit omega (134 aa).

The tract at residues 77–108 (IDEPEPDPASLLAAGGNASASGDEEEDAPEAV) is disordered. Positions 85-97 (ASLLAAGGNASAS) are enriched in low complexity.

It belongs to the RNA polymerase subunit omega family. As to quaternary structure, the RNAP catalytic core consists of 2 alpha, 1 beta, 1 beta' and 1 omega subunit. When a sigma factor is associated with the core the holoenzyme is formed, which can initiate transcription.

The enzyme catalyses RNA(n) + a ribonucleoside 5'-triphosphate = RNA(n+1) + diphosphate. In terms of biological role, promotes RNA polymerase assembly. Latches the N- and C-terminal regions of the beta' subunit thereby facilitating its interaction with the beta and alpha subunits. In Rhizobium rhizogenes (strain K84 / ATCC BAA-868) (Agrobacterium radiobacter), this protein is DNA-directed RNA polymerase subunit omega.